A 175-amino-acid chain; its full sequence is Large ribosomal subunit protein uL10 (175 aa).

This sequence belongs to the universal ribosomal protein uL10 family. Part of the ribosomal stalk of the 50S ribosomal subunit. The N-terminus interacts with L11 and the large rRNA to form the base of the stalk. The C-terminus forms an elongated spine to which L12 dimers bind in a sequential fashion forming a multimeric L10(L12)X complex.

Functionally, forms part of the ribosomal stalk, playing a central role in the interaction of the ribosome with GTP-bound translation factors. The polypeptide is Large ribosomal subunit protein uL10 (Synechococcus sp. (strain WH7803)).